A 699-amino-acid chain; its full sequence is Sarcoplasmic reticulum histidine-rich calcium-binding protein (699 aa).

The N-terminal stretch at 1-28 (MGHHRPWLHASVLWAGVASLLLPPAMTQ) is a signal peptide. The segment at 50 to 95 (SEEASAELRHHLHSPRDHPDENKDVSTENGHHFWSHPDREKEDEDV) is disordered. Over residues 55 to 89 (AELRHHLHSPRDHPDENKDVSTENGHHFWSHPDRE) the composition is skewed to basic and acidic residues. Thr-76 carries the phosphothreonine; by FAM20C modification. 10 repeat units span residues 106-121 (HRSQDHKVGDEGVSGE), 134-154 (HRGHGSEDTEDSAEHRHHLPS), 155-177 (HRSHSHQDEDEDEVVSSEHHHHI), 180-213 (HGHRGHDGEDDEGEEEEEEEEEEEEASTEYGHQA), 214-237 (HRHRGHGSEEDEDVSDGHHHHGPS), 238-270 (HRHQGHEEDDDDDDDDDDDDDDDDVSIEYRHQA), 271-294 (HRHQGHGIEEDEDVSDGHHHRDPS), 295-318 (HRHRSHEEDDNDDDDVSTEYGHQA), 319-342 (HRHQDHRKEEVEAVSGEHHHHVPD), and 343-365 (HRHQGHRDEEEDEDVSTERWHQG). The tract at residues 106-342 (HRSQDHKVGD…SGEHHHHVPD (237 aa)) is 6 X approximate tandem repeats. Positions 106-365 (HRSQDHKVGD…DVSTERWHQG (260 aa)) are 4 X tandem repeats, acidic. A phosphoserine; by FAM20C mark is found at Ser-119 and Ser-145. The tract at residues 127–617 (HGGQARGHRG…EDTGPQDAQE (491 aa)) is disordered. 2 stretches are compositionally biased toward basic residues: residues 148–158 (HRHHLPSHRSH) and 173–183 (HHHHILRHGHR). Acidic residues predominate over residues 187–206 (GEDDEGEEEEEEEEEEEEAS). A compositionally biased stretch (basic residues) spans 231–241 (HHHHGPSHRHQ). Acidic residues predominate over residues 244–263 (EEDDDDDDDDDDDDDDDDVS). Residues 288–298 (HHHRDPSHRHR) are compositionally biased toward basic residues. Acidic residues predominate over residues 302–311 (EDDNDDDDVS). Basic and acidic residues predominate over residues 324 to 335 (HRKEEVEAVSGE). Position 333 is a phosphoserine (Ser-333). Residues 336-347 (HHHHVPDHRHQG) are compositionally biased toward basic residues. Phosphoserine; by FAM20C occurs at positions 358 and 431. Basic and acidic residues-rich tracts occupy residues 444 to 463 (SHQDEETGHGQRGSIKEMSH) and 470 to 481 (VVKDRSHLRKDD). The residue at position 494 (Ser-494) is a Phosphoserine; by FAM20C. Residues 504–515 (QGEKGTHHGSRD) are compositionally biased toward basic and acidic residues. 2 stretches are compositionally biased toward acidic residues: residues 532 to 551 (QEEEEEEDKEEEEEEEDEER) and 567 to 581 (SEEEEEEEEGLEEDE). Ser-567 is subject to Phosphoserine; by FAM20C. The interval 627–673 (CGYCSFCNRCTECESCHCDEENMGEHCDQCQHCQFCYLCPLVCETVC) is metal-binding.

Belongs to the HRC family.

Its subcellular location is the sarcoplasmic reticulum lumen. In terms of biological role, may play a role in the regulation of calcium sequestration or release in the SR of skeletal and cardiac muscle. This is Sarcoplasmic reticulum histidine-rich calcium-binding protein (HRC) from Homo sapiens (Human).